Reading from the N-terminus, the 710-residue chain is Dynein axonemal assembly factor 3 homolog (710 aa).

The segment at 403–487 (GAEAGAGAGP…DSDPAAAAST (85 aa)) is disordered. The span at 404 to 416 (AEAGAGAGPGGEA) shows a compositional bias: gly residues. Residues 417–438 (AAGASSSSGKEEAAAAAAAGKE) are compositionally biased toward low complexity. Residues 453-462 (SGSGAPGAGT) are compositionally biased toward gly residues. The segment covering 478 to 487 (DSDPAAAAST) has biased composition (low complexity).

Belongs to the DNAAF3 family.

It is found in the cytoplasm. Required for the assembly of axonemal inner and outer dynein arms. Involved in preassembly of dyneins into complexes before their transport into cilia. In Chlamydomonas reinhardtii (Chlamydomonas smithii), this protein is Dynein axonemal assembly factor 3 homolog (DAB1).